The primary structure comprises 912 residues: WD repeat-containing protein 44 (912 aa).

Disordered regions lie at residues 206-352 (DIIE…ELTD), 399-426 (SNDA…LKQK), and 460-481 (RDEV…GMPY). The span at 236–258 (NRPPQPINAPPPRPPPPARPAPP) shows a compositional bias: pro residues. Residues 264–278 (GDTDFDRSSGFEYQK) show a composition bias toward basic and acidic residues. The segment covering 288-311 (SPNTLTENMNRDSQPSLDLASATS) has biased composition (polar residues). Basic and acidic residues predominate over residues 410–422 (KPQSHQSETDGGK). The segment covering 469 to 478 (DDPSSSDDEG) has biased composition (acidic residues). The stretch at 511–550 (EHVGAVWTMKFSHCGRLLASAGQDNVVRIWVLKNAFDYFN) is one WD 1 repeat. Residues 559–594 (EGRVSPSPSQESLNSSKSDTDGGVFSGTDDVDPDDK) are disordered. Residues 563 to 575 (SPSPSQESLNSSK) are compositionally biased toward low complexity. 7 WD repeats span residues 608 to 646 (GHTA…CLCC), 648 to 688 (QHID…VALW), 693 to 732 (GQTK…YHTQ), 743 to 782 (RVGR…LSMK), 787 to 826 (VNSS…SKFT), 841 to 880 (AHNA…ENIP), and 882 to 912 (GALK…KNIS). The interval 861–882 (AETSSEKQEGDQAEPVENIPSG) is disordered.

Its subcellular location is the cytoplasm. The protein resides in the cytosol. It localises to the perinuclear region. The protein localises to the endosome membrane. It is found in the golgi apparatus. Its subcellular location is the trans-Golgi network. Functionally, downstream effector for rab11. May be involved in vesicle recycling. May also be involved in the inhibition of the intracellular ciliogenesis pathway. This Xenopus laevis (African clawed frog) protein is WD repeat-containing protein 44 (wdr44).